Consider the following 223-residue polypeptide: Ribonuclease HII (223 aa).

An RNase H type-2 domain is found at 32-223 (FHIAGVDEVG…LKGRFRDNMS (192 aa)). Residues Asp38, Glu39, and Asp130 each coordinate a divalent metal cation.

It belongs to the RNase HII family. Mn(2+) serves as cofactor. Mg(2+) is required as a cofactor.

The protein localises to the cytoplasm. The enzyme catalyses Endonucleolytic cleavage to 5'-phosphomonoester.. Its function is as follows. Endonuclease that specifically degrades the RNA of RNA-DNA hybrids. This chain is Ribonuclease HII, found in Bartonella quintana (strain Toulouse) (Rochalimaea quintana).